A 262-amino-acid chain; its full sequence is 3-methyl-2-oxobutanoate hydroxymethyltransferase (262 aa).

The Mg(2+) site is built by Asp-44 and Asp-83. Residues 44 to 45 (DS), Asp-83, and Lys-112 contribute to the 3-methyl-2-oxobutanoate site. Residue Glu-114 participates in Mg(2+) binding. The Proton acceptor role is filled by Glu-180.

Belongs to the PanB family. Homodecamer; pentamer of dimers. Mg(2+) serves as cofactor.

It is found in the cytoplasm. It carries out the reaction 3-methyl-2-oxobutanoate + (6R)-5,10-methylene-5,6,7,8-tetrahydrofolate + H2O = 2-dehydropantoate + (6S)-5,6,7,8-tetrahydrofolate. It functions in the pathway cofactor biosynthesis; (R)-pantothenate biosynthesis; (R)-pantoate from 3-methyl-2-oxobutanoate: step 1/2. In terms of biological role, catalyzes the reversible reaction in which hydroxymethyl group from 5,10-methylenetetrahydrofolate is transferred onto alpha-ketoisovalerate to form ketopantoate. This chain is 3-methyl-2-oxobutanoate hydroxymethyltransferase, found in Chromobacterium violaceum (strain ATCC 12472 / DSM 30191 / JCM 1249 / CCUG 213 / NBRC 12614 / NCIMB 9131 / NCTC 9757 / MK).